Consider the following 120-residue polypeptide: DNA-directed RNA polymerase II subunit rpb11 (120 aa).

It belongs to the archaeal Rpo11/eukaryotic RPB11/RPC19 RNA polymerase subunit family. In terms of assembly, component of the RNA polymerase II (Pol II) complex consisting of 12 subunits.

It is found in the nucleus. In terms of biological role, DNA-dependent RNA polymerase catalyzes the transcription of DNA into RNA using the four ribonucleoside triphosphates as substrates. Component of RNA polymerase II which synthesizes mRNA precursors and many functional non-coding RNAs. Pol II is the central component of the basal RNA polymerase II transcription machinery. It is composed of mobile elements that move relative to each other. RPB11 is part of the core element with the central large cleft. The polypeptide is DNA-directed RNA polymerase II subunit rpb11 (polr2j) (Dictyostelium discoideum (Social amoeba)).